The following is a 420-amino-acid chain: Glycerol-3-phosphate dehydrogenase [NAD(+)] 2, chloroplastic (420 aa).

Residues 1-45 (MAASVQPACLDLHFSGKHPPLLKHNAIIVRCVSSPNVIPEADSIS) constitute a chloroplast transit peptide. Residues 94-99 (GGGSFG), Phe171, Lys194, and Ala228 contribute to the NAD(+) site. Lys194 contacts substrate. Lys279 functions as the Proton acceptor in the catalytic mechanism. NAD(+) is bound by residues Arg343 and Glu369. A substrate-binding site is contributed by 343-344 (RN).

This sequence belongs to the NAD-dependent glycerol-3-phosphate dehydrogenase family.

It localises to the plastid. It is found in the chloroplast. It catalyses the reaction sn-glycerol 3-phosphate + NAD(+) = dihydroxyacetone phosphate + NADH + H(+). It functions in the pathway membrane lipid metabolism; glycerophospholipid metabolism. In terms of biological role, required to supply glycerol-3-phosphate in the chloroplast for the synthesis of glycerolipids. Required for activation of systemic acquired resistance (SAR). Provision of glycerol-3-phosphate may be involved in generating lipid signals necessary for mediating defense responses and SAR. This Arabidopsis thaliana (Mouse-ear cress) protein is Glycerol-3-phosphate dehydrogenase [NAD(+)] 2, chloroplastic (GLY1).